Reading from the N-terminus, the 319-residue chain is HTH-type transcriptional regulator YidZ (319 aa).

The HTH lysR-type domain occupies 8–65; that stretch reads LDLNLLLCLQLLMQERSVTKAAKRMNVTPSAVSKSLSKLRTWFDDPLFVNTPLGLTPT. Positions 25 to 44 form a DNA-binding region, H-T-H motif; sequence VTKAAKRMNVTPSAVSKSLS.

This sequence belongs to the LysR transcriptional regulatory family.

Involved in anaerobic NO protection. The sequence is that of HTH-type transcriptional regulator YidZ from Citrobacter koseri (strain ATCC BAA-895 / CDC 4225-83 / SGSC4696).